Consider the following 273-residue polypeptide: Pyridoxal phosphate homeostasis protein (273 aa).

Residue Ser6 is modified to Phosphoserine. An N6-(pyridoxal phosphate)lysine modification is found at Lys47. Tyr69 is modified (phosphotyrosine). At Lys125 the chain carries N6-succinyllysine. 2 positions are modified to phosphoserine: Ser226 and Ser244. The span at 251–260 (DYSKKTDKPA) shows a compositional bias: basic and acidic residues. Residues 251–273 (DYSKKTDKPAAELQAPEEVAQAH) are disordered.

Belongs to the pyridoxal phosphate-binding protein YggS/PROSC family.

In terms of biological role, pyridoxal 5'-phosphate (PLP)-binding protein, which may be involved in intracellular homeostatic regulation of pyridoxal 5'-phosphate (PLP), the active form of vitamin B6. This is Pyridoxal phosphate homeostasis protein from Bos taurus (Bovine).